The sequence spans 610 residues: UvrABC system protein C (610 aa).

One can recognise a GIY-YIG domain in the interval serine 16–valine 94. The UVR domain maps to glutamine 204 to valine 239.

The protein belongs to the UvrC family. Interacts with UvrB in an incision complex.

The protein localises to the cytoplasm. In terms of biological role, the UvrABC repair system catalyzes the recognition and processing of DNA lesions. UvrC both incises the 5' and 3' sides of the lesion. The N-terminal half is responsible for the 3' incision and the C-terminal half is responsible for the 5' incision. The protein is UvrABC system protein C of Pectobacterium atrosepticum (strain SCRI 1043 / ATCC BAA-672) (Erwinia carotovora subsp. atroseptica).